A 129-amino-acid polypeptide reads, in one-letter code: Small ribosomal subunit protein uS11 (129 aa).

This sequence belongs to the universal ribosomal protein uS11 family. In terms of assembly, part of the 30S ribosomal subunit. Interacts with proteins S7 and S18. Binds to IF-3.

In terms of biological role, located on the platform of the 30S subunit, it bridges several disparate RNA helices of the 16S rRNA. Forms part of the Shine-Dalgarno cleft in the 70S ribosome. The chain is Small ribosomal subunit protein uS11 from Methylobacterium radiotolerans (strain ATCC 27329 / DSM 1819 / JCM 2831 / NBRC 15690 / NCIMB 10815 / 0-1).